The sequence spans 459 residues: Phosphoglucosamine mutase (459 aa).

The active-site Phosphoserine intermediate is the serine 112. The Mg(2+) site is built by serine 112, aspartate 249, aspartate 251, and aspartate 253. Serine 112 carries the phosphoserine modification.

The protein belongs to the phosphohexose mutase family. It depends on Mg(2+) as a cofactor. Activated by phosphorylation.

It catalyses the reaction alpha-D-glucosamine 1-phosphate = D-glucosamine 6-phosphate. In terms of biological role, catalyzes the conversion of glucosamine-6-phosphate to glucosamine-1-phosphate. The polypeptide is Phosphoglucosamine mutase (Synechococcus sp. (strain RCC307)).